The primary structure comprises 312 residues: MEITFLGTSSGVPTRSRNVSSVALRLPQRAEVWLFDCGEGTQHQLLRSDVKISQITRIFVTHMHGDHIYGLTGLLASCGLAGSGQPIEIYGPPELKDYLKACAKYSHFKLPHHIRFHPIHPGILYEDAEFSVSCNLLKHRIPAYGYRIAESDRPGRFNVEKAKSLGIPPGPVYGELKQGKTVTLPDGRNIRGQDLCGERETGRKVIYCTDTVFCEGAIALSEDADVLIHEATFAHQDAQLAFDRLHSTSTMAAQVALAAQVKQLIMTHFSPRYAPGNALQLDDLLQEARAIFPNTILARDFMTYEVPRRSSD.

The Zn(2+) site is built by His-62, His-64, Asp-66, His-67, His-139, Asp-210, and His-268. Residue Asp-66 is the Proton acceptor of the active site.

Belongs to the RNase Z family. As to quaternary structure, homodimer. Requires Zn(2+) as cofactor.

It catalyses the reaction Endonucleolytic cleavage of RNA, removing extra 3' nucleotides from tRNA precursor, generating 3' termini of tRNAs. A 3'-hydroxy group is left at the tRNA terminus and a 5'-phosphoryl group is left at the trailer molecule.. In terms of biological role, zinc phosphodiesterase, which displays some tRNA 3'-processing endonuclease activity. Probably involved in tRNA maturation, by removing a 3'-trailer from precursor tRNA. The sequence is that of Ribonuclease Z from Crocosphaera subtropica (strain ATCC 51142 / BH68) (Cyanothece sp. (strain ATCC 51142)).